The following is a 298-amino-acid chain: Cation-efflux pump FieF (298 aa).

Residues 24 to 44 (LLIKIFAWWYTGSVSILAALV) form a helical membrane-spanning segment. Residues aspartate 45 and aspartate 49 each contribute to the Zn(2+) site. 2 consecutive transmembrane segments (helical) span residues 80–100 (SLAA…LTSI) and 112–132 (PGVG…LVTF). Zn(2+) is bound by residues histidine 151 and aspartate 155. A run of 2 helical transmembrane segments spans residues 154–174 (SDVM…YGWH) and 176–196 (ADAL…LRMG).

Belongs to the cation diffusion facilitator (CDF) transporter (TC 2.A.4) family. FieF subfamily. As to quaternary structure, homodimer.

It localises to the cell inner membrane. It catalyses the reaction Zn(2+)(in) + H(+)(out) = Zn(2+)(out) + H(+)(in). The catalysed reaction is Cd(2+)(in) + H(+)(out) = Cd(2+)(out) + H(+)(in). It carries out the reaction Fe(2+)(in) + H(+)(out) = Fe(2+)(out) + H(+)(in). Its function is as follows. Divalent metal cation transporter which exports Zn(2+), Cd(2+) and possibly Fe(2+). May be involved in zinc and iron detoxification by efflux. The sequence is that of Cation-efflux pump FieF from Salmonella typhi.